A 499-amino-acid chain; its full sequence is MNKKYIMAIDQGTTSTRAMIFNHRGEVVSKSQQEFSQIYPKPGWVEHSPDEIWVSILGVMSGALRSKGISPKEIAAIGITNQRETTVIWDKNTDEPVYNAIVWQCRRTTDICQELKNNGLEDKFKEKTGLVLDPYFSGTKIKWILDNVAGARQKAKNGDLLFGTIDSWLIWKLTGGKVHVTDYTNASRTLLYNIHELDWDEELLDILGIPESILPEVKASSTIYGNTVPYHFFGEEVPISGIAGDQQAATFAQGCYEKGMTKITYGTGGFMLMNTGKEAVTSDNGLLTTIAWGLDDGIYYALEGSIFNAGSAIQWLRDELDLIEDAADSEYFASKVEDTGGVYVVPAFTGLGAPYWDPRARGIIVGLTRGTNKNHLIRATIESLIYQSKDVLMAMVEDSGLDLKDIKVDGGAAANNLLLQFLSDMTGSRVERPINTETTAAGAAYLAGLAIDFWTDQEEVLKIRKVDREFNPDMSGEKREQLYRGWKKAINAALSWSKT.

An ADP-binding site is contributed by threonine 13. ATP-binding residues include threonine 13, threonine 14, and serine 15. Threonine 13 lines the sn-glycerol 3-phosphate pocket. Arginine 17 lines the ADP pocket. Residues arginine 83, glutamate 84, tyrosine 135, and aspartate 245 each coordinate sn-glycerol 3-phosphate. Positions 83, 84, 135, 245, and 246 each coordinate glycerol. Positions 267 and 310 each coordinate ADP. Positions 267, 310, 314, and 411 each coordinate ATP. Glycine 411 and asparagine 415 together coordinate ADP.

It belongs to the FGGY kinase family. Homotetramer and homodimer (in equilibrium).

It catalyses the reaction glycerol + ATP = sn-glycerol 3-phosphate + ADP + H(+). It functions in the pathway polyol metabolism; glycerol degradation via glycerol kinase pathway; sn-glycerol 3-phosphate from glycerol: step 1/1. Its activity is regulated as follows. Activated by phosphorylation and inhibited by fructose 1,6-bisphosphate (FBP). Key enzyme in the regulation of glycerol uptake and metabolism. Catalyzes the phosphorylation of glycerol to yield sn-glycerol 3-phosphate. This is Glycerol kinase from Halothermothrix orenii (strain H 168 / OCM 544 / DSM 9562).